A 140-amino-acid polypeptide reads, in one-letter code: PDZ domain-containing protein 11 (140 aa).

Residues 47–129 (IVTLKKPPGA…ISMRVRFFPY (83 aa)) enclose the PDZ domain.

Interacts with ATP2B1, ATP2B2, ATP2B3, ATP2B4 and ATP7A. Interacts with PLEKHA7 (via WW domains) at zonula adherens; this interaction is essential for the interaction between PLEKHA7 and the ADAM10-binding protein TSPAN33. Interacts with SLC5A6.

It is found in the cytoplasm. Its subcellular location is the cell junction. The protein localises to the adherens junction. The protein resides in the cell membrane. Mediates docking of ADAM10 to zonula adherens by interacting with PLEKHA7 which is required for PLEKHA7 to interact with the ADAM10-binding protein TSPAN33. This Bos taurus (Bovine) protein is PDZ domain-containing protein 11 (PDZD11).